A 175-amino-acid chain; its full sequence is Endoribonuclease YbeY (175 aa).

His129, His133, and His139 together coordinate Zn(2+).

The protein belongs to the endoribonuclease YbeY family. It depends on Zn(2+) as a cofactor.

It localises to the cytoplasm. Its function is as follows. Single strand-specific metallo-endoribonuclease involved in late-stage 70S ribosome quality control and in maturation of the 3' terminus of the 16S rRNA. This is Endoribonuclease YbeY from Lactobacillus johnsonii (strain CNCM I-12250 / La1 / NCC 533).